The following is a 274-amino-acid chain: Glutamate racemase (274 aa).

Substrate contacts are provided by residues 9-10 (DS) and 41-42 (YG). C73 (proton donor/acceptor) is an active-site residue. Residue 74–75 (NT) coordinates substrate. Catalysis depends on C183, which acts as the Proton donor/acceptor. Residue 184–185 (TH) participates in substrate binding.

The protein belongs to the aspartate/glutamate racemases family.

It catalyses the reaction L-glutamate = D-glutamate. It functions in the pathway cell wall biogenesis; peptidoglycan biosynthesis. Provides the (R)-glutamate required for cell wall biosynthesis. The chain is Glutamate racemase from Shewanella baltica (strain OS185).